The sequence spans 304 residues: Putative F-box/LRR-repeat protein 21 (304 aa).

In terms of domain architecture, F-box spans 43 to 90 (RRNWVDLPPELTTSILLRLSLTDILDNAQKVCKEWRRICKDPSMWRKI). 4 LRR repeats span residues 132–159 (LSYI…GVVN), 173–198 (THSC…KLNS), 218–241 (GPLE…HLQL), and 243–268 (ANRL…DVRK).

This is Putative F-box/LRR-repeat protein 21 (FBL21) from Arabidopsis thaliana (Mouse-ear cress).